The sequence spans 437 residues: Interactor protein for cytohesin exchange factors 1 (437 aa).

In terms of domain architecture, PH spans 41 to 140; sequence HADCQGWLYK…WLNKLGSAVI (100 aa). 2 disordered regions span residues 143 to 225 and 273 to 307; these read ESTT…PDTV and LSSDDTSSLSSNHDHLTVPDKPAGSKIMDKEETKV. The span at 151 to 162 shows a compositional bias: acidic residues; it reads CYSESEQEDPEI. Positions 172–200 are enriched in low complexity; the sequence is ASQTQSLTAQQASSSSPSLSGTSYSFSSL. Polar residues predominate over residues 201–214; that stretch reads ENTVKTPSSFPSSL. Residues 273–283 are compositionally biased toward low complexity; that stretch reads LSSDDTSSLSS. CRAC domain stretches follow at residues 315–320 and 339–348; these read KLYKSL and LRKSFVKRCK. Residues 389 to 437 form a required for interaction with CYTH2 region; it reads KYREWKVMNTLLIQDIYQQQRASPAPDDTDDTPQELKKSPSSPSVENSI. Residues 406 to 437 are disordered; the sequence is QQQRASPAPDDTDDTPQELKKSPSSPSVENSI. Ser411 carries the phosphoserine modification. Residues 427-437 show a composition bias toward polar residues; the sequence is SPSSPSVENSI.

In terms of assembly, interacts with guanine-nucleotide exchange factors PSCD1, PSCD2, PSCD3 and PSCD4. Interacts (via C-terminus) with cytohesin-2 CYTH2.

It localises to the cytoplasm. It is found in the cell membrane. In terms of biological role, enhances the promotion of guanine-nucleotide exchange by PSCD2 on ARF6 in a concentration-dependent manner. The sequence is that of Interactor protein for cytohesin exchange factors 1 (IPCEF1) from Homo sapiens (Human).